The following is a 128-amino-acid chain: Small ribosomal subunit protein bS16 (128 aa).

Residues 107–128 (AAEAKAAAANESDDSGTDSTES) are disordered. Over residues 117–128 (ESDDSGTDSTES) the composition is skewed to acidic residues.

The protein belongs to the bacterial ribosomal protein bS16 family.

The chain is Small ribosomal subunit protein bS16 from Synechococcus sp. (strain CC9311).